The following is a 343-amino-acid chain: Heat-inducible transcription repressor HrcA (343 aa).

Belongs to the HrcA family.

Negative regulator of class I heat shock genes (grpE-dnaK-dnaJ and groELS operons). Prevents heat-shock induction of these operons. The polypeptide is Heat-inducible transcription repressor HrcA (Thermoanaerobacter sp. (strain X514)).